Consider the following 439-residue polypeptide: UPF0597 protein Dalk_4447 (439 aa).

The protein belongs to the UPF0597 family.

The polypeptide is UPF0597 protein Dalk_4447 (Desulfatibacillum aliphaticivorans).